The sequence spans 347 residues: Phenylalanine--tRNA ligase alpha subunit (347 aa).

Glu261 is a Mg(2+) binding site.

The protein belongs to the class-II aminoacyl-tRNA synthetase family. Phe-tRNA synthetase alpha subunit type 1 subfamily. As to quaternary structure, tetramer of two alpha and two beta subunits. Mg(2+) serves as cofactor.

The protein resides in the cytoplasm. The catalysed reaction is tRNA(Phe) + L-phenylalanine + ATP = L-phenylalanyl-tRNA(Phe) + AMP + diphosphate + H(+). This chain is Phenylalanine--tRNA ligase alpha subunit, found in Streptococcus thermophilus (strain CNRZ 1066).